The primary structure comprises 287 residues: ATP synthase gamma chain (287 aa).

The protein belongs to the ATPase gamma chain family. As to quaternary structure, F-type ATPases have 2 components, CF(1) - the catalytic core - and CF(0) - the membrane proton channel. CF(1) has five subunits: alpha(3), beta(3), gamma(1), delta(1), epsilon(1). CF(0) has three main subunits: a, b and c.

Its subcellular location is the cell inner membrane. In terms of biological role, produces ATP from ADP in the presence of a proton gradient across the membrane. The gamma chain is believed to be important in regulating ATPase activity and the flow of protons through the CF(0) complex. This is ATP synthase gamma chain from Cronobacter sakazakii (strain ATCC BAA-894) (Enterobacter sakazakii).